The primary structure comprises 471 residues: MKIKTRFAPSPTGYLHVGGARTALYSWLFARNHGGEFVLRIEDTDLERSTPEAIEAIMDGMNWLSLEWDEGPYYQTKRFDRYNAVIDQMLEEGTAYKCYCSKERLEALREEQMAKGEKPRYDGRCRHSHEHHADDEPCVVRFANPQEGSVVFDDQIRGPIEFSNQELDDLIIRRTDGSPTYNFCVVVDDWDMEITHVIRGEDHINNTPRQINILKALKAPVPVYAHVSMINGDDGKKLSKRHGAVSVMQYRDDGYLPEALLNYLVRLGWSHGDQEIFTREEMIKYFTLNAVSKSASAFNTDKLLWLNHHYINALPPEYVATHLQWHIEQENIDTRNGPQLADLVKLLGERCKTLKEMAQSCRYFYEDFAEFDADAAKKHLRPVARQPLEVVRDKLAAITDWTAENVHHAIQATADELEVGMGKVGMPLRVAVTGAGQSPALDVTVHAIGKTRSIERINKALDFIAERENQQ.

The short motif at 9 to 19 is the 'HIGH' region element; that stretch reads PSPTGYLHVGG. Residues cysteine 98, cysteine 100, cysteine 125, and histidine 127 each contribute to the Zn(2+) site. The 'KMSKS' region motif lies at 237 to 241; that stretch reads KLSKR. Lysine 240 contacts ATP.

The protein belongs to the class-I aminoacyl-tRNA synthetase family. Glutamate--tRNA ligase type 1 subfamily. As to quaternary structure, monomer. Requires Zn(2+) as cofactor.

It is found in the cytoplasm. It catalyses the reaction tRNA(Glu) + L-glutamate + ATP = L-glutamyl-tRNA(Glu) + AMP + diphosphate. Functionally, catalyzes the attachment of glutamate to tRNA(Glu) in a two-step reaction: glutamate is first activated by ATP to form Glu-AMP and then transferred to the acceptor end of tRNA(Glu). This Escherichia coli O9:H4 (strain HS) protein is Glutamate--tRNA ligase.